A 261-amino-acid chain; its full sequence is U11/U12 small nuclear ribonucleoprotein 31 kDa protein (261 aa).

The disordered stretch occupies residues 18–51 (YYRYSSVAAPPPSNPKHQPSSSAKSSAPGGGSGG). In terms of domain architecture, RRM spans 57-135 (STLYVSNLDF…RKLTVSIAAD (79 aa)). Residues 153–169 (RCYECGDEGHLSYECPK) form a CCHC-type zinc finger. Residues 165–261 (YECPKNQLGP…YFSDESDDED (97 aa)) are disordered. The segment covering 226-235 (AGERLRKREA) has biased composition (basic and acidic residues).

As to quaternary structure, component of the U11/U12 snRNPs that are part of the U12-type spliceosome. In terms of tissue distribution, ubiquitous. Abundantly expressed in the shoot apical neristem.

Its subcellular location is the nucleus. Its function is as follows. RNA chaperone required for proper U12 intron splicing and for normal growth and development of plants. Mainly responsible for meristem activity. Plays a role in regulating cell division. The polypeptide is U11/U12 small nuclear ribonucleoprotein 31 kDa protein (SNRNP31) (Arabidopsis thaliana (Mouse-ear cress)).